The following is a 56-amino-acid chain: Small ribosomal subunit protein uS14 (56 aa).

Zn(2+)-binding residues include C21, C24, C39, and C42.

Belongs to the universal ribosomal protein uS14 family. Zinc-binding uS14 subfamily. Part of the 30S ribosomal subunit. Zn(2+) serves as cofactor.

Its function is as follows. Binds 16S rRNA, required for the assembly of 30S particles. This Thermococcus kodakarensis (strain ATCC BAA-918 / JCM 12380 / KOD1) (Pyrococcus kodakaraensis (strain KOD1)) protein is Small ribosomal subunit protein uS14.